Here is a 109-residue protein sequence, read N- to C-terminus: FK506-binding protein (109 aa).

In terms of domain architecture, PPIase FKBP-type spans 20–108 (GKEITVHYTG…IFEVELLKVY (89 aa)).

It belongs to the FKBP-type PPIase family.

It catalyses the reaction [protein]-peptidylproline (omega=180) = [protein]-peptidylproline (omega=0). PPIases accelerate the folding of proteins. The polypeptide is FK506-binding protein (fbp) (Neisseria meningitidis serogroup C).